Consider the following 230-residue polypeptide: MTVTLALPSKGRLKDATVELLREAGYPIRLPENERRYRAGIDGLDGLEVTFLSASEIARELDRGSIDLGVTGEDLVRETIPDWESRVEIAARLGFGHADVVVAVPEIWFDVSTMADLDDVAADFRHRHSRRLRIATKYWRLTQQFFSQKHGIQVYRIVESLGATEGAPAAGSADIIVDITSTGSTLKANHLKVLDDGVILRSQACLVVAKKKRPAEDARLIAELAKAVRR.

It belongs to the ATP phosphoribosyltransferase family. Short subfamily. In terms of assembly, heteromultimer composed of HisG and HisZ subunits.

It is found in the cytoplasm. It catalyses the reaction 1-(5-phospho-beta-D-ribosyl)-ATP + diphosphate = 5-phospho-alpha-D-ribose 1-diphosphate + ATP. Its pathway is amino-acid biosynthesis; L-histidine biosynthesis; L-histidine from 5-phospho-alpha-D-ribose 1-diphosphate: step 1/9. Catalyzes the condensation of ATP and 5-phosphoribose 1-diphosphate to form N'-(5'-phosphoribosyl)-ATP (PR-ATP). Has a crucial role in the pathway because the rate of histidine biosynthesis seems to be controlled primarily by regulation of HisG enzymatic activity. This is ATP phosphoribosyltransferase (hisG) from Chelativorans sp. (strain BNC1).